The following is a 521-amino-acid chain: Cytochrome P450 1A1 (521 aa).

Phenylalanine 229 provides a ligand contact to substrate. Cysteine 463 provides a ligand contact to heme.

It belongs to the cytochrome P450 family. The cofactor is heme.

It localises to the endoplasmic reticulum membrane. The protein resides in the microsome membrane. It carries out the reaction an organic molecule + reduced [NADPH--hemoprotein reductase] + O2 = an alcohol + oxidized [NADPH--hemoprotein reductase] + H2O + H(+). Its function is as follows. Cytochromes P450 are a group of heme-thiolate monooxygenases. They oxidize a variety of structurally unrelated compounds, including steroids, fatty acids, and xenobiotics. This chain is Cytochrome P450 1A1 (cyp1a1), found in Chelon auratus (Golden grey mullet).